The sequence spans 204 residues: Large ribosomal subunit protein eL15 (204 aa).

Belongs to the eukaryotic ribosomal protein eL15 family. Component of the large ribosomal subunit.

The protein resides in the cytoplasm. Functionally, component of the large ribosomal subunit. The ribosome is a large ribonucleoprotein complex responsible for the synthesis of proteins in the cell. The sequence is that of Large ribosomal subunit protein eL15 (rpl15) from Mylopharyngodon piceus (Black carp).